The sequence spans 264 residues: S-adenosylmethionine decarboxylase proenzyme (264 aa).

The active-site Schiff-base intermediate with substrate; via pyruvic acid is the serine 112. At serine 112 the chain carries Pyruvic acid (Ser); by autocatalysis. The active-site Proton acceptor; for processing activity is the histidine 117. Catalysis depends on cysteine 140, which acts as the Proton donor; for catalytic activity.

It belongs to the prokaryotic AdoMetDC family. Type 2 subfamily. Heterooctamer of four alpha and four beta chains arranged as a tetramer of alpha/beta heterodimers. Requires pyruvate as cofactor. Post-translationally, is synthesized initially as an inactive proenzyme. Formation of the active enzyme involves a self-maturation process in which the active site pyruvoyl group is generated from an internal serine residue via an autocatalytic post-translational modification. Two non-identical subunits are generated from the proenzyme in this reaction, and the pyruvate is formed at the N-terminus of the alpha chain, which is derived from the carboxyl end of the proenzyme. The post-translation cleavage follows an unusual pathway, termed non-hydrolytic serinolysis, in which the side chain hydroxyl group of the serine supplies its oxygen atom to form the C-terminus of the beta chain, while the remainder of the serine residue undergoes an oxidative deamination to produce ammonia and the pyruvoyl group blocking the N-terminus of the alpha chain.

It carries out the reaction S-adenosyl-L-methionine + H(+) = S-adenosyl 3-(methylsulfanyl)propylamine + CO2. It functions in the pathway amine and polyamine biosynthesis; S-adenosylmethioninamine biosynthesis; S-adenosylmethioninamine from S-adenosyl-L-methionine: step 1/1. Its function is as follows. Catalyzes the decarboxylation of S-adenosylmethionine to S-adenosylmethioninamine (dcAdoMet), the propylamine donor required for the synthesis of the polyamines spermine and spermidine from the diamine putrescine. The chain is S-adenosylmethionine decarboxylase proenzyme from Cronobacter sakazakii (strain ATCC BAA-894) (Enterobacter sakazakii).